Consider the following 106-residue polypeptide: Putative double-stranded DNA mimic protein VCM66_1163 (106 aa).

This sequence belongs to the putative dsDNA mimic protein family.

Its function is as follows. May act as a double-stranded DNA (dsDNA) mimic. Probably regulates the activity of a dsDNA-binding protein. The protein is Putative double-stranded DNA mimic protein VCM66_1163 of Vibrio cholerae serotype O1 (strain M66-2).